We begin with the raw amino-acid sequence, 105 residues long: Nitrogenase-stabilizing/protective protein NifW (105 aa).

This sequence belongs to the NifW family. As to quaternary structure, homotrimer; associates with NifD.

Its function is as follows. May protect the nitrogenase Fe-Mo protein from oxidative damage. The chain is Nitrogenase-stabilizing/protective protein NifW from Rhodospirillum centenum (strain ATCC 51521 / SW).